Consider the following 105-residue polypeptide: Large ribosomal subunit protein eL36 (105 aa).

This sequence belongs to the eukaryotic ribosomal protein eL36 family. As to quaternary structure, component of the large ribosomal subunit.

The protein localises to the cytoplasm. Its subcellular location is the cytosol. Component of the large ribosomal subunit. The ribosome is a large ribonucleoprotein complex responsible for the synthesis of proteins in the cell. This is Large ribosomal subunit protein eL36 (RPL36) from Hydrophis hardwickii (Hardwick's spine-bellied seasnake).